The following is a 134-amino-acid chain: Phosphoribosyl-AMP cyclohydrolase (134 aa).

Asp-90 provides a ligand contact to Mg(2+). Position 91 (Cys-91) interacts with Zn(2+). Positions 92 and 94 each coordinate Mg(2+). Zn(2+) contacts are provided by Cys-107 and Cys-114.

It belongs to the PRA-CH family. As to quaternary structure, homodimer. The cofactor is Mg(2+). Requires Zn(2+) as cofactor.

It localises to the cytoplasm. It carries out the reaction 1-(5-phospho-beta-D-ribosyl)-5'-AMP + H2O = 1-(5-phospho-beta-D-ribosyl)-5-[(5-phospho-beta-D-ribosylamino)methylideneamino]imidazole-4-carboxamide. It functions in the pathway amino-acid biosynthesis; L-histidine biosynthesis; L-histidine from 5-phospho-alpha-D-ribose 1-diphosphate: step 3/9. In terms of biological role, catalyzes the hydrolysis of the adenine ring of phosphoribosyl-AMP. In Arthrobacter sp. (strain FB24), this protein is Phosphoribosyl-AMP cyclohydrolase.